The following is a 778-amino-acid chain: Putative ATP-dependent RNA helicase MJ1505 (778 aa).

In terms of domain architecture, Helicase ATP-binding spans 22–186; it reads IAANALKKKT…EICENLGIEH (165 aa). 35-42 contacts ATP; the sequence is LSTGLGKT. The DEAH box motif lies at 137–140; it reads DEAH. The Helicase C-terminal domain maps to 338–516; it reads KVVDMVKNIL…EIKEETEEIK (179 aa).

It belongs to the DEAD box helicase family. DEAH subfamily.

It catalyses the reaction ATP + H2O = ADP + phosphate + H(+). In Methanocaldococcus jannaschii (strain ATCC 43067 / DSM 2661 / JAL-1 / JCM 10045 / NBRC 100440) (Methanococcus jannaschii), this protein is Putative ATP-dependent RNA helicase MJ1505.